Here is a 101-residue protein sequence, read N- to C-terminus: Small ribosomal subunit protein uS14 (101 aa).

It belongs to the universal ribosomal protein uS14 family. As to quaternary structure, part of the 30S ribosomal subunit. Contacts proteins S3 and S10.

Functionally, binds 16S rRNA, required for the assembly of 30S particles and may also be responsible for determining the conformation of the 16S rRNA at the A site. This is Small ribosomal subunit protein uS14 from Roseobacter denitrificans (strain ATCC 33942 / OCh 114) (Erythrobacter sp. (strain OCh 114)).